Here is a 967-residue protein sequence, read N- to C-terminus: Disks large homolog 1 (967 aa).

The 61-residue stretch at 5–65 (SSEKAHKAIE…LYEQTLLSER (61 aa)) folds into the L27 domain. A PDZ 1 domain is found at 202–289 (NIVLEKGHTG…VVSLSLKRRK (88 aa)). Positions 324 to 351 (IHSPSAPIHPPPPPPVHHGSLSQLSVGQ) are disordered. Residues 330–339 (PIHPPPPPPV) are compositionally biased toward pro residues. 2 PDZ domains span residues 361–448 (VIDL…QQGT) and 510–591 (PVQL…QYRP). The region spanning 619–690 (RKSEYVRALF…PSKKRVEKRE (72 aa)) is the SH3 domain. The segment at 673-723 (EETAEGVIPSKKRVEKRERLRRKQVNFNSGSQSLGRNSSTTGLENRRGSRS) is disordered. Residues 682 to 696 (SKKRVEKRERLRRKQ) show a composition bias toward basic residues. Residues 697–715 (VNFNSGSQSLGRNSSTTGL) show a composition bias toward polar residues. In terms of domain architecture, Guanylate kinase-like spans 769–955 (VRPVIILGAL…VLSKVYSIIS (187 aa)).

Belongs to the MAGUK family. As to quaternary structure, homooligomerizes; requires L27 domain. Interacts (via L27 domain) with ajm-1; the interaction regulates ajm-1 apical junction location. As to expression, expressed in the apical junctions in the hypodermis. Expressed in epithelial cells in the reproductive system including vulva, uterus and spermatheca.

The protein resides in the membrane. It localises to the apical cell membrane. The protein localises to the cell junction. Its subcellular location is the adherens junction. It is found in the lateral cell membrane. The protein resides in the cytoplasm. In terms of biological role, essential multidomain scaffolding protein required for normal development. Recruits channels, receptors and signaling molecules to discrete plasma membrane domains in polarized cells. Required for proper embryonic elongation. Acts upstream of ajm-1 and becomes localized to apical junctions independently of ajm-1. With let-413, cooperatively regulates ajm-1 localization to apical junctions and the establishment of newly formed epithelia. Plays a role in assembling the adherens junction by clustering ajm-1 and other proteins, to form electron-dense structures; may form a compartment distinct to that of hmp-1 and associated proteins. Plays a role in the directed outgrowth of seam cells, towards neighboring seam cells, during larval development. This chain is Disks large homolog 1, found in Caenorhabditis elegans.